We begin with the raw amino-acid sequence, 270 residues long: 4-hydroxy-tetrahydrodipicolinate reductase (270 aa).

NAD(+) is bound by residues 11-16 and E37; that span reads GASGRM. R38 provides a ligand contact to NADP(+). NAD(+) contacts are provided by residues 101-103 and 125-128; these read GTT and APNM. The active-site Proton donor/acceptor is H158. H159 contacts (S)-2,3,4,5-tetrahydrodipicolinate. K162 acts as the Proton donor in catalysis. Residue 168–169 coordinates (S)-2,3,4,5-tetrahydrodipicolinate; the sequence is GT.

It belongs to the DapB family.

It is found in the cytoplasm. The catalysed reaction is (S)-2,3,4,5-tetrahydrodipicolinate + NAD(+) + H2O = (2S,4S)-4-hydroxy-2,3,4,5-tetrahydrodipicolinate + NADH + H(+). It catalyses the reaction (S)-2,3,4,5-tetrahydrodipicolinate + NADP(+) + H2O = (2S,4S)-4-hydroxy-2,3,4,5-tetrahydrodipicolinate + NADPH + H(+). The protein operates within amino-acid biosynthesis; L-lysine biosynthesis via DAP pathway; (S)-tetrahydrodipicolinate from L-aspartate: step 4/4. Functionally, catalyzes the conversion of 4-hydroxy-tetrahydrodipicolinate (HTPA) to tetrahydrodipicolinate. The sequence is that of 4-hydroxy-tetrahydrodipicolinate reductase from Shewanella frigidimarina (strain NCIMB 400).